Consider the following 131-residue polypeptide: Small ribosomal subunit protein bS18 (131 aa).

The segment covering 1 to 10 has biased composition (polar residues); the sequence is MSNGTDSKTA. Positions 1–60 are disordered; the sequence is MSNGTDSKTASAPPARSGGGFGGGGSRGGDRGDRGDRGGDRGDRGGGLGGDDDKRGGGRG. Over residues 17-27 the composition is skewed to gly residues; sequence SGGGFGGGGSR. A compositionally biased stretch (basic and acidic residues) spans 28-44; the sequence is GGDRGDRGDRGGDRGDR.

This sequence belongs to the bacterial ribosomal protein bS18 family. Part of the 30S ribosomal subunit. Forms a tight heterodimer with protein bS6.

Functionally, binds as a heterodimer with protein bS6 to the central domain of the 16S rRNA, where it helps stabilize the platform of the 30S subunit. This is Small ribosomal subunit protein bS18 from Myxococcus xanthus (strain DK1622).